A 528-amino-acid polypeptide reads, in one-letter code: Esterase PE16 (528 aa).

One can recognise a PE domain in the interval 1–93 (MSFVFAVPEM…AGWYVDAEAA (93 aa)). The tract at residues 94-143 (NAALVDTAATGASELGSGGRTALILGSTGTPRPPFDYMQQVYDRYIAPHY) is linker. The 221-residue stretch at 149-369 (SGLYTPAQFQ…LRAIIELGYD (221 aa)) folds into the PE-PPE domain. Ser-199 is a catalytic residue. A helical transmembrane segment spans residues 503 to 523 (IALLVFAAGIPAVAAVAILTG).

This sequence belongs to the mycobacterial PE family.

The protein resides in the membrane. The enzyme catalyses a hexanoate ester + H2O = an aliphatic alcohol + hexanoate + H(+). It carries out the reaction an octanoate ester + H2O = an aliphatic alcohol + octanoate + H(+). The catalysed reaction is a butanoate ester + H2O = an aliphatic alcohol + butanoate + H(+). Esterase activity is significantly inhibited by the serine modifier phenylmethylsulfonyl fluoride (PMSF). In terms of biological role, esterase that hydrolyzes short to medium chain fatty acid esters with the highest specific activity for p-nitrophenyl caproate (pNPC6). Has lower activity with p-nitrophenyl caprylate (pNPC8) and p-nitrophenyl butyrate (pNPC4). Has weak activity with p-nitrophenyl caprate (pNPC10) and p-nitrophenyl laurate (pNPC12). Does not possess lipolytic activity and cutinase activity. The sequence is that of Esterase PE16 from Mycobacterium tuberculosis (strain ATCC 25618 / H37Rv).